Reading from the N-terminus, the 365-residue chain is Serine protease 40 (365 aa).

The signal sequence occupies residues 1–34 (MCGIRAKKSGLGGYGAGLLAALLGVSFLSQHAQT). Asn-44 carries N-linked (GlcNAc...) asparagine glycosylation. A Peptidase S1 domain is found at 69 to 313 (IYGGQIAGAE…FDKWIKDNKK (245 aa)). The cysteines at positions 94 and 110 are disulfide-linked. Catalysis depends on charge relay system residues His-109 and Asp-159. Disulfide bonds link Cys-193-Cys-270, Cys-226-Cys-249, and Cys-260-Cys-288. The Charge relay system role is filled by Ser-264. The interval 312–343 (KKSSSNSKPGESPHHPGSPENENPEGDNKNQG) is disordered.

It belongs to the peptidase S1 family. Expressed in testis. More specifically, abundantly expressed in the haploid round spermatid.

It localises to the cytoplasmic vesicle. The protein resides in the secretory vesicle. Its subcellular location is the acrosome. The protein localises to the secreted. In terms of biological role, may play an important role in the sperm/egg interaction; released during the acrosome reaction. The chain is Serine protease 40 (Prss40) from Mus musculus (Mouse).